The primary structure comprises 436 residues: EPS I polysaccharide export inner membrane protein EpsE (436 aa).

12 helical membrane-spanning segments follow: residues 20–40 (VLGL…NIML), 49–69 (FGLF…LATG), 91–111 (LCAF…ALYL), 132–152 (MAAI…FLYA), 160–180 (ASVS…MGPI), 184–204 (VVAL…QLVI), 234–254 (VLTT…LAAM), 261–281 (LALF…PATL), 307–327 (ALLF…LLAG), 341–361 (AAAS…SVLL), 375–395 (FAMA…ALRL), and 396–416 (GYGA…LILF).

It to E.coli bicyclomycin resistance protein (BCR).

It localises to the cell inner membrane. Functionally, probably involved in polymerization and/or export of exopolysaccharide EPS I which functions as a virulence factor. May play a role in export of EPS I or its intermediates across the membranes. This is EPS I polysaccharide export inner membrane protein EpsE (epsE) from Ralstonia nicotianae (strain ATCC BAA-1114 / GMI1000) (Ralstonia solanacearum).